Here is a 269-residue protein sequence, read N- to C-terminus: Thiazole synthase (269 aa).

Residue Lys95 is the Schiff-base intermediate with DXP of the active site. 1-deoxy-D-xylulose 5-phosphate-binding positions include Gly156, 182–183 (AG), and 204–205 (NT).

It belongs to the ThiG family. Homotetramer. Forms heterodimers with either ThiH or ThiS.

The protein localises to the cytoplasm. The enzyme catalyses [ThiS sulfur-carrier protein]-C-terminal-Gly-aminoethanethioate + 2-iminoacetate + 1-deoxy-D-xylulose 5-phosphate = [ThiS sulfur-carrier protein]-C-terminal Gly-Gly + 2-[(2R,5Z)-2-carboxy-4-methylthiazol-5(2H)-ylidene]ethyl phosphate + 2 H2O + H(+). The protein operates within cofactor biosynthesis; thiamine diphosphate biosynthesis. Its function is as follows. Catalyzes the rearrangement of 1-deoxy-D-xylulose 5-phosphate (DXP) to produce the thiazole phosphate moiety of thiamine. Sulfur is provided by the thiocarboxylate moiety of the carrier protein ThiS. In vitro, sulfur can be provided by H(2)S. The protein is Thiazole synthase of Shewanella frigidimarina (strain NCIMB 400).